Reading from the N-terminus, the 297-residue chain is Tyrosine recombinase XerD (297 aa).

The Core-binding (CB) domain occupies 1–86 (MKDSALIELF…AMRKLFQYLY (86 aa)). The Tyr recombinase domain occupies 107–291 (RLPKYLTEQQ…AKERLKHLHE (185 aa)). Catalysis depends on residues Arg-147, Lys-171, His-243, Arg-246, and His-269. Tyr-278 functions as the O-(3'-phospho-DNA)-tyrosine intermediate in the catalytic mechanism.

Belongs to the 'phage' integrase family. XerD subfamily. In terms of assembly, forms a cyclic heterotetrameric complex composed of two molecules of XerC and two molecules of XerD.

The protein resides in the cytoplasm. In terms of biological role, site-specific tyrosine recombinase, which acts by catalyzing the cutting and rejoining of the recombining DNA molecules. The XerC-XerD complex is essential to convert dimers of the bacterial chromosome into monomers to permit their segregation at cell division. It also contributes to the segregational stability of plasmids. This chain is Tyrosine recombinase XerD, found in Pasteurella multocida (strain Pm70).